A 62-amino-acid polypeptide reads, in one-letter code: Photosystem II reaction center protein K (62 aa).

The propeptide occupies 1–25 (MPNILSLTCICFNSVLYPTTSFFFA). Residues 33-53 (IFNPIVDVMPVIPLFFFLLAF) form a helical membrane-spanning segment.

This sequence belongs to the PsbK family. As to quaternary structure, PSII is composed of 1 copy each of membrane proteins PsbA, PsbB, PsbC, PsbD, PsbE, PsbF, PsbH, PsbI, PsbJ, PsbK, PsbL, PsbM, PsbT, PsbX, PsbY, PsbZ, Psb30/Ycf12, at least 3 peripheral proteins of the oxygen-evolving complex and a large number of cofactors. It forms dimeric complexes.

The protein localises to the plastid. It localises to the chloroplast thylakoid membrane. Functionally, one of the components of the core complex of photosystem II (PSII). PSII is a light-driven water:plastoquinone oxidoreductase that uses light energy to abstract electrons from H(2)O, generating O(2) and a proton gradient subsequently used for ATP formation. It consists of a core antenna complex that captures photons, and an electron transfer chain that converts photonic excitation into a charge separation. This chain is Photosystem II reaction center protein K, found in Agrostis stolonifera (Creeping bentgrass).